A 762-amino-acid polypeptide reads, in one-letter code: MKDIAIRGYCDRPSVATGETIRFYVSANETRGTFDAELVRLIHGDSNPAGPGYKEEAIKSDLEGQYPARFQRTQFGSYVEVADPDAGLQPDGAFSVHLFLWSTTPSRGRQGIASRWNDERQSGWNLAIEDGRVVFTIGDGSGATSSVVSDRPLFQQIWYSITGVYDPEKKQLRLYQKSVVNRTNSRFGLVVPLDSDCAVSADATVKAADSETSLLIAGLGEAAAQDGRTWCIAHYNGKVDAPKIYGCALGQDDAEKLSRGEIVRPISRLAHWDFSAGIGLNGIPTDHVVDASGNGHHGRCMNQPDRGSTGWNWDGHEENFIHCPEQYGALWFHEDCLDDCRWEKDFEFTVPEGLKSDFYAVKIRYEDTEDYIPFFVLPPRGTATAPILVIASTLSYLAYANEQIMHKADIGQAVAGHTPVLNENDVELHKNLSYYGLSTYDGHIDGRGVQYTSWRRPIMNLRPKHRQGFGSIWELPADLHLIDWLNHNGFEYDVATEHDLNDQGAELLRRYKVVLTGSHPEYQTWANADAWEDYLADGGRGMYLAANGMYWIVEVHPEKPWVMEVRKELGVTAWEAPPGEYHYSTNGRRGGRFRGRARATQKIWGTGMSSFGFDHSGYFVQMPDSQDERVAWIMEGIDPEERIGDGGLVGGGAGGYELDRYDLALGTPPNTLLLASSVEHSVVYTVIPDDKAFPHPGMNGGEHPFVRADITYFSTANGGGMFATSSISWLGSLSWNDYDNNVSKMTKNVLNQFIKDEPAPRV.

In terms of assembly, heterotetramer of two DmfA1 (alpha) and two DmfA2 (beta) subunits.

The catalysed reaction is N,N-dimethylformamide + H2O = dimethylamine + formate. With respect to regulation, activity is slightly inhibited by Mg(2+) and Mn(2+), and slightly increased by Cu(2+). Activity is slightly inhibited by the chelating agents 8-hydroxyquinoline, ethylenediaminetetraacetate, o-phenanthroline and 2,2'-bipyridyl. Its function is as follows. Hydrolyzes N,N-dimethylformamide, and to a lesser extent N,N-dimethylacetamide and N,N-diethylacetamide. Has no activity against the substituted amides N-methylformamide, N-ethylformamide, N-ethylformamide and N-methylacetamide or the unsubstituted amides formamide, nicotinamide, acetoamide, benzamide, acetamide and acrylamide. The chain is N,N-dimethylformamidase beta subunit from Alcaligenes sp.